The following is a 204-amino-acid chain: Viral interleukin-6 homolog (204 aa).

An N-terminal signal peptide occupies residues 1–22 (MRWFKLWSILLVGSLLVSGTRG).

Belongs to the IL-6 superfamily. Interacts with host IL6ST.

In terms of biological role, initiates signal transduction through binding to interleukin-6 receptor subunit beta IL6ST, independently of the cognate IL6 receptor IL6R. In infected primary effusion lymphoma cells, promotes proliferation of cells, protects them from apoptosis, and promotes immune evasion of interferon activity. Also drives blood to lymphatic endothelial cell differentiation. The protein is Viral interleukin-6 homolog (K2) of Homo sapiens (Human).